Consider the following 478-residue polypeptide: DNA gyrase subunit B (478 aa).

One can recognise a Toprim domain in the interval Cys319–Pro438. Mg(2+) is bound by residues Glu325, Asp403, and Asp405.

This sequence belongs to the type II topoisomerase GyrB family. In terms of assembly, heterotetramer, composed of two GyrA and two GyrB chains. In the heterotetramer, GyrA contains the active site tyrosine that forms a transient covalent intermediate with DNA, while GyrB binds cofactors and catalyzes ATP hydrolysis. Mg(2+) serves as cofactor. It depends on Mn(2+) as a cofactor. Requires Ca(2+) as cofactor.

The protein localises to the cytoplasm. It carries out the reaction ATP-dependent breakage, passage and rejoining of double-stranded DNA.. Functionally, a type II topoisomerase that negatively supercoils closed circular double-stranded (ds) DNA in an ATP-dependent manner to modulate DNA topology and maintain chromosomes in an underwound state. Negative supercoiling favors strand separation, and DNA replication, transcription, recombination and repair, all of which involve strand separation. Also able to catalyze the interconversion of other topological isomers of dsDNA rings, including catenanes and knotted rings. Type II topoisomerases break and join 2 DNA strands simultaneously in an ATP-dependent manner. In Cytophaga hutchinsonii, this protein is DNA gyrase subunit B (gyrB).